Here is a 556-residue protein sequence, read N- to C-terminus: 5-aminolevulinate synthase, mitochondrial (556 aa).

The transit peptide at 1 to 46 (MDSLARQSAKICPFVSRVTSSMQQVQVLHKTNMSAMAQQCPVMRRA) directs the protein to the mitochondrion. 3 residues coordinate substrate: Arg-105, Ser-218, and Lys-237. Pyridoxal 5'-phosphate contacts are provided by Ser-270, His-298, and Thr-342. Lys-345 is a catalytic residue. Lys-345 is subject to N6-(pyridoxal phosphate)lysine. Pyridoxal 5'-phosphate-binding residues include Thr-374 and Ser-375. A substrate-binding site is contributed by Thr-460.

Belongs to the class-II pyridoxal-phosphate-dependent aminotransferase family. Homodimer. Requires pyridoxal 5'-phosphate as cofactor.

Its subcellular location is the mitochondrion matrix. The enzyme catalyses succinyl-CoA + glycine + H(+) = 5-aminolevulinate + CO2 + CoA. The protein operates within porphyrin-containing compound metabolism; protoporphyrin-IX biosynthesis; 5-aminolevulinate from glycine: step 1/1. Functionally, catalyzes the synthesis of 5-aminolevulinate (ALA) from succinyl-CoA and glycine, the first and rate-limiting step in heme biosynthesis. The chain is 5-aminolevulinate synthase, mitochondrial (HEM1) from Eremothecium gossypii (strain ATCC 10895 / CBS 109.51 / FGSC 9923 / NRRL Y-1056) (Yeast).